Here is a 1454-residue protein sequence, read N- to C-terminus: Serine/threonine-protein kinase VPS15 (1454 aa).

G2 carries N-myristoyl glycine lipidation. In terms of domain architecture, Protein kinase spans 27–300; that stretch reads VHYVSQLNSS…LLNKYRGIFF (274 aa). ATP-binding positions include 33–41 and K54; that span reads LNSSRFLKT. D147 functions as the Proton acceptor in the catalytic mechanism. HEAT repeat units follow at residues 460–497, 576–613, 615–652, and 654–691; these read NKID…SVRK, KLIQ…FFGR, RTND…LLGT, and TLEQ…TGLI. WD repeat units follow at residues 1078-1118, 1126-1165, 1229-1268, 1275-1315, 1344-1382, and 1422-1454; these read NEPN…VGEV, DCSS…QESE, PRHG…LIRS, APIT…CQYA, RSLN…SSKA, and YHHD…GIFQ.

The protein belongs to the protein kinase superfamily. Ser/Thr protein kinase family. In terms of assembly, component of the autophagy-specific VPS34 PI3-kinase complex I composed of VPS15, VPS30, VPS34, ATG14 and ATG38; and of the VPS34 PI3-kinase complex II composed of VPS15, VPS30, VPS34 and VPS38. Interacts directly with ATG14 and GPA1. Interacts directly with VPS34. Post-translationally, autophosphorylated.

It is found in the golgi apparatus. The protein resides in the trans-Golgi network membrane. The protein localises to the endosome membrane. It catalyses the reaction L-seryl-[protein] + ATP = O-phospho-L-seryl-[protein] + ADP + H(+). The catalysed reaction is L-threonyl-[protein] + ATP = O-phospho-L-threonyl-[protein] + ADP + H(+). Functionally, serine/threonine-protein kinase required for cytoplasm to vacuole transport (Cvt) and autophagy as a part of the autophagy-specific VPS34 PI3-kinase complex I. This complex is essential to recruit the ATG8-phosphatidylinositol conjugate and the ATG12-ATG5 conjugate to the pre-autophagosomal structure. Is also involved in endosome-to-Golgi retrograde transport as part of the VPS34 PI3-kinase complex II. This second complex is required for the endosome-to-Golgi retrieval of PEP1 and KEX2, and the recruitment of VPS5 and VPS7, two components of the retromer complex, to endosomal membranes (probably through the synthesis of a specific pool of phosphatidylinositol 3-phosphate recruiting the retromer to the endosomes). By regulating VPS34 kinase activity, VPS15 appears to be essential for the efficient delivery of soluble hydrolases to the yeast vacuole. May function as a G protein beta subunit to propagate the pheromone response at the endosome with GPA1. The protein is Serine/threonine-protein kinase VPS15 of Saccharomyces cerevisiae (strain ATCC 204508 / S288c) (Baker's yeast).